Here is a 117-residue protein sequence, read N- to C-terminus: Large ribosomal subunit protein uL18 (117 aa).

The protein belongs to the universal ribosomal protein uL18 family. As to quaternary structure, part of the 50S ribosomal subunit; part of the 5S rRNA/L5/L18/L25 subcomplex. Contacts the 5S and 23S rRNAs.

Its function is as follows. This is one of the proteins that bind and probably mediate the attachment of the 5S RNA into the large ribosomal subunit, where it forms part of the central protuberance. The polypeptide is Large ribosomal subunit protein uL18 (Cronobacter sakazakii (strain ATCC BAA-894) (Enterobacter sakazakii)).